The sequence spans 1057 residues: Carbamoyl phosphate synthase large chain (1057 aa).

The carboxyphosphate synthetic domain stretch occupies residues 1–401 (MPKRNDIKTI…SLLKAIRSLE (401 aa)). Residues Arg129, Arg169, Gly175, Gly176, Lys208, Ile210, Glu215, Gly241, Ile242, His243, Gln284, and Glu298 each coordinate ATP. The 195-residue stretch at 133–327 (RTLMNYLNVP…IAKLAAKIAV (195 aa)) folds into the ATP-grasp 1 domain. Residues Gln284, Glu298, and Asn300 each coordinate Mg(2+). 3 residues coordinate Mn(2+): Gln284, Glu298, and Asn300. The oligomerization domain stretch occupies residues 402 to 546 (YGVHHLGLPN…YGTYETENES (145 aa)). The tract at residues 547-929 (IITDKEKILV…ALFKGLTGSG (383 aa)) is carbamoyl phosphate synthetic domain. The 191-residue stretch at 671–861 (EALLRKINVP…MAQLAMRAII (191 aa)) folds into the ATP-grasp 2 domain. 10 residues coordinate ATP: Arg707, Arg746, Leu748, Glu752, Gly777, Val778, His779, Ser780, Gln820, and Glu832. Residues Gln820, Glu832, and Asn834 each coordinate Mg(2+). Gln820, Glu832, and Asn834 together coordinate Mn(2+). The region spanning 930 to 1057 (VEVKDHGTVL…ESMTFTMRQM (128 aa)) is the MGS-like domain. An allosteric domain region spans residues 930–1057 (VEVKDHGTVL…ESMTFTMRQM (128 aa)).

It belongs to the CarB family. As to quaternary structure, composed of two chains; the small (or glutamine) chain promotes the hydrolysis of glutamine to ammonia, which is used by the large (or ammonia) chain to synthesize carbamoyl phosphate. Tetramer of heterodimers (alpha,beta)4. The cofactor is Mg(2+). Mn(2+) is required as a cofactor.

The enzyme catalyses hydrogencarbonate + L-glutamine + 2 ATP + H2O = carbamoyl phosphate + L-glutamate + 2 ADP + phosphate + 2 H(+). The catalysed reaction is hydrogencarbonate + NH4(+) + 2 ATP = carbamoyl phosphate + 2 ADP + phosphate + 2 H(+). The protein operates within amino-acid biosynthesis; L-arginine biosynthesis; carbamoyl phosphate from bicarbonate: step 1/1. It participates in pyrimidine metabolism; UMP biosynthesis via de novo pathway; (S)-dihydroorotate from bicarbonate: step 1/3. In terms of biological role, large subunit of the glutamine-dependent carbamoyl phosphate synthetase (CPSase). CPSase catalyzes the formation of carbamoyl phosphate from the ammonia moiety of glutamine, carbonate, and phosphate donated by ATP, constituting the first step of 2 biosynthetic pathways, one leading to arginine and/or urea and the other to pyrimidine nucleotides. The large subunit (synthetase) binds the substrates ammonia (free or transferred from glutamine from the small subunit), hydrogencarbonate and ATP and carries out an ATP-coupled ligase reaction, activating hydrogencarbonate by forming carboxy phosphate which reacts with ammonia to form carbamoyl phosphate. The protein is Carbamoyl phosphate synthase large chain of Staphylococcus aureus (strain bovine RF122 / ET3-1).